Reading from the N-terminus, the 314-residue chain is Homoserine O-acetyltransferase (314 aa).

Residue cysteine 142 is the Acyl-thioester intermediate of the active site. 2 residues coordinate substrate: lysine 163 and serine 192. Histidine 235 serves as the catalytic Proton acceptor. Residue glutamate 237 is part of the active site. A substrate-binding site is contributed by arginine 249.

Belongs to the MetA family.

It is found in the cytoplasm. It carries out the reaction L-homoserine + acetyl-CoA = O-acetyl-L-homoserine + CoA. It functions in the pathway amino-acid biosynthesis; L-methionine biosynthesis via de novo pathway; O-acetyl-L-homoserine from L-homoserine: step 1/1. Transfers an acetyl group from acetyl-CoA to L-homoserine, forming acetyl-L-homoserine. This chain is Homoserine O-acetyltransferase, found in Streptococcus mutans serotype c (strain ATCC 700610 / UA159).